Reading from the N-terminus, the 401-residue chain is 2-amino-3-carboxymuconate-6-semialdehyde decarboxylase (401 aa).

Zn(2+) contacts are provided by His-18 and His-20. Residue Arg-59 coordinates substrate. His-234 and Asp-352 together coordinate Zn(2+).

Belongs to the metallo-dependent hydrolases superfamily. ACMSD family. Monomer.

It carries out the reaction 2-amino-3-carboxymuconate 6-semialdehyde + H(+) = 2-aminomuconate 6-semialdehyde + CO2. Its pathway is secondary metabolite metabolism; quinolate metabolism. Functionally, converts alpha-amino-beta-carboxymuconate-epsilon-semialdehyde (ACMS) to alpha-aminomuconate semialdehyde (AMS). The sequence is that of 2-amino-3-carboxymuconate-6-semialdehyde decarboxylase from Caenorhabditis elegans.